The primary structure comprises 97 residues: Co-chaperonin GroES (97 aa).

This sequence belongs to the GroES chaperonin family. In terms of assembly, heptamer of 7 subunits arranged in a ring. Interacts with the chaperonin GroEL.

The protein localises to the cytoplasm. Its function is as follows. Together with the chaperonin GroEL, plays an essential role in assisting protein folding. The GroEL-GroES system forms a nano-cage that allows encapsulation of the non-native substrate proteins and provides a physical environment optimized to promote and accelerate protein folding. GroES binds to the apical surface of the GroEL ring, thereby capping the opening of the GroEL channel. The protein is Co-chaperonin GroES of Salmonella agona (strain SL483).